The primary structure comprises 62 residues: MVAYPEISWTRNGCTVSKYPEISWTRNGCTVSKYPEISWTRNGCTVSKYPEISWTRNGCTVA.

The propeptide occupies 1–3 (MVA). Cys-14 carries S-farnesyl cysteine lipidation. Residues 15–18 (TVSK) constitute a propeptide that is removed on maturation. A lipid anchor (S-farnesyl cysteine) is attached at Cys-29. A propeptide spanning residues 30–33 (TVSK) is cleaved from the precursor. Cys-44 is lipidated: S-farnesyl cysteine. A propeptide spanning residues 45–48 (TVSK) is cleaved from the precursor. The S-farnesyl cysteine moiety is linked to residue Cys-59. Positions 60–62 (TVA) are excised as a propeptide.

The protein localises to the cell membrane. In terms of biological role, rhodotorucin-A is a mating pheromone in cells of mating type A of Rhodosporidium toruloides. The chain is Rhodotorucin-A peptides type 1 (RHA1) from Rhodotorula toruloides (Yeast).